A 456-amino-acid polypeptide reads, in one-letter code: Enolase (456 aa).

A (2R)-2-phosphoglycerate-binding site is contributed by glutamine 164. Glutamate 207 functions as the Proton donor in the catalytic mechanism. Mg(2+)-binding residues include aspartate 244, glutamate 287, and aspartate 314. Residues lysine 339, arginine 368, serine 369, and lysine 390 each coordinate (2R)-2-phosphoglycerate. Catalysis depends on lysine 339, which acts as the Proton acceptor.

The protein belongs to the enolase family. Component of the RNA degradosome, a multiprotein complex involved in RNA processing and mRNA degradation. Mg(2+) is required as a cofactor.

Its subcellular location is the cytoplasm. The protein resides in the secreted. The protein localises to the cell surface. It carries out the reaction (2R)-2-phosphoglycerate = phosphoenolpyruvate + H2O. The protein operates within carbohydrate degradation; glycolysis; pyruvate from D-glyceraldehyde 3-phosphate: step 4/5. In terms of biological role, catalyzes the reversible conversion of 2-phosphoglycerate (2-PG) into phosphoenolpyruvate (PEP). It is essential for the degradation of carbohydrates via glycolysis. In Francisella tularensis subsp. holarctica (strain OSU18), this protein is Enolase.